Reading from the N-terminus, the 217-residue chain is Adapter protein MecA (217 aa).

This sequence belongs to the MecA family. As to quaternary structure, homodimer.

Functionally, enables the recognition and targeting of unfolded and aggregated proteins to the ClpC protease or to other proteins involved in proteolysis. The polypeptide is Adapter protein MecA (Listeria monocytogenes serovar 1/2a (strain ATCC BAA-679 / EGD-e)).